Consider the following 493-residue polypeptide: Cobyric acid synthase (493 aa).

The GATase cobBQ-type domain maps to 252–443 (DLQITVVRLP…LHGLFDNGPW (192 aa)). Cys-333 acts as the Nucleophile in catalysis. His-435 is an active-site residue.

It belongs to the CobB/CobQ family. CobQ subfamily.

It functions in the pathway cofactor biosynthesis; adenosylcobalamin biosynthesis. Functionally, catalyzes amidations at positions B, D, E, and G on adenosylcobyrinic A,C-diamide. NH(2) groups are provided by glutamine, and one molecule of ATP is hydrogenolyzed for each amidation. The protein is Cobyric acid synthase of Nostoc sp. (strain PCC 7120 / SAG 25.82 / UTEX 2576).